The chain runs to 520 residues: MWRQSRWNEPLITEMSRRGRRGALPPRPDEKVVKEVGPLKLPQSLARGSPPSLPEVSEVEVVRHYTRLSQMAYGVDNGPVPLGSCTMKYNPRVAARLAFDPRLETLHPLQDDETVQGVLEAIYMVQEWLRHITGMDACTVHPAAGSQGELAGVLMIKRFHEMRGDLDKRRVIIVPDSAHGTNPASAAMGGFQVVEVPTGDDGNVDMEALKAAVGGDTAGLMITNPSTLGLFEENILEISRLVHEAGGLLYYDGANLNGIIGRARPGDMEFDIAHVNLHKTFSVPHGGGGPGSGPVCVKRVEVVDGVTLEDLLPGPRVVYSREEGLYRVRPPGRWSVGRLRAWIANTLAVLWAYAYILAMGPQGLRLAGEVSVVNTNYFIRLMEGHWGYSLPYAPSRPRKHEVVLSAKPLKRETGATAEDVAKGLLDAGLYAPTIYFPLIVEEALMIEFTESETKENIEAYAARLKEIAEEARRDPSTPRKWPRNTTSARVDNVRANHPRTVTPTWRVEVLRRQGKLGPLR.

Residues 1 to 29 are disordered; sequence MWRQSRWNEPLITEMSRRGRRGALPPRPD. Lysine 279 carries the N6-(pyridoxal phosphate)lysine modification.

The protein belongs to the GcvP family. C-terminal subunit subfamily. The glycine cleavage system is composed of four proteins: P, T, L and H. In this organism, the P 'protein' is a heterodimer of two subunits. Pyridoxal 5'-phosphate serves as cofactor.

The catalysed reaction is N(6)-[(R)-lipoyl]-L-lysyl-[glycine-cleavage complex H protein] + glycine + H(+) = N(6)-[(R)-S(8)-aminomethyldihydrolipoyl]-L-lysyl-[glycine-cleavage complex H protein] + CO2. Functionally, the glycine cleavage system catalyzes the degradation of glycine. The P protein binds the alpha-amino group of glycine through its pyridoxal phosphate cofactor; CO(2) is released and the remaining methylamine moiety is then transferred to the lipoamide cofactor of the H protein. The sequence is that of Probable glycine dehydrogenase (decarboxylating) subunit 2 from Aeropyrum pernix (strain ATCC 700893 / DSM 11879 / JCM 9820 / NBRC 100138 / K1).